The sequence spans 255 residues: Small ribosomal subunit protein eS1B (255 aa).

N-acetylalanine; partial is present on A2. A Phosphoserine modification is found at S245. K248 is covalently cross-linked (Glycyl lysine isopeptide (Lys-Gly) (interchain with G-Cter in ubiquitin)). T254 is modified (phosphothreonine).

Belongs to the eukaryotic ribosomal protein eS1 family. Component of the small ribosomal subunit. Mature ribosomes consist of a small (40S) and a large (60S) subunit. The 40S subunit contains about 33 different proteins and 1 molecule of RNA (18S). The 60S subunit contains about 49 different proteins and 3 molecules of RNA (25S, 5.8S and 5S).

Its subcellular location is the cytoplasm. The protein is Small ribosomal subunit protein eS1B of Saccharomyces cerevisiae (strain RM11-1a) (Baker's yeast).